The sequence spans 125 residues: Small ribosomal subunit protein uS12 (125 aa).

Asp-89 is modified (3-methylthioaspartic acid). The tract at residues Gly-100–Ala-125 is disordered. A compositionally biased stretch (basic residues) spans Lys-111–Ala-125.

It belongs to the universal ribosomal protein uS12 family. In terms of assembly, part of the 30S ribosomal subunit. Contacts proteins S8 and S17. May interact with IF1 in the 30S initiation complex.

Functionally, with S4 and S5 plays an important role in translational accuracy. Its function is as follows. Interacts with and stabilizes bases of the 16S rRNA that are involved in tRNA selection in the A site and with the mRNA backbone. Located at the interface of the 30S and 50S subunits, it traverses the body of the 30S subunit contacting proteins on the other side and probably holding the rRNA structure together. The combined cluster of proteins S8, S12 and S17 appears to hold together the shoulder and platform of the 30S subunit. The sequence is that of Small ribosomal subunit protein uS12 from Thioalkalivibrio sulfidiphilus (strain HL-EbGR7).